Here is a 506-residue protein sequence, read N- to C-terminus: Zinc finger protein 157 (506 aa).

The 72-residue stretch at 27–98 folds into the KRAB domain; it reads VSFEDVAVDF…EEESSGHGYS (72 aa). 12 C2H2-type zinc fingers span residues 162–184, 190–212, 218–240, 246–268, 274–296, 302–324, 330–352, 358–380, 386–408, 414–436, 442–464, and 470–492; these read FECH…LRIH, YECG…QKTH, FECN…TRTH, YECT…QRTH, YECS…HRTH, YECG…QRIH, YECG…QRTH, YQCN…QRIH, YECN…QRMH, YECS…RRTH, YECS…QRIH, and FECQ…QRTH.

The protein belongs to the krueppel C2H2-type zinc-finger protein family.

The protein resides in the nucleus. May be involved in transcriptional regulation. The sequence is that of Zinc finger protein 157 (ZNF157) from Homo sapiens (Human).